The primary structure comprises 108 residues: uncharacterized protein (108 aa).

The segment covering 39–68 has biased composition (low complexity); sequence GLRSRSGTGSGNSRNGLKESGGSRSGPGKP. The tract at residues 39–95 is disordered; the sequence is GLRSRSGTGSGNSRNGLKESGGSRSGPGKPRGNRKSSRRIRPRPTSEKPRGYWRSSW. The segment covering 69–80 has biased composition (basic residues); sequence RGNRKSSRRIRP.

This is an uncharacterized protein from Acidithiobacillus ferridurans.